A 161-amino-acid chain; its full sequence is Phosphopantetheine adenylyltransferase (161 aa).

Thr9 is a substrate binding site. Residues 9-10 (TF) and His17 contribute to the ATP site. 3 residues coordinate substrate: Lys41, Leu73, and Arg87. ATP-binding positions include 88–90 (GLR), Glu98, and 123–129 (YSFISST).

It belongs to the bacterial CoaD family. Homohexamer. Mg(2+) serves as cofactor.

It localises to the cytoplasm. It catalyses the reaction (R)-4'-phosphopantetheine + ATP + H(+) = 3'-dephospho-CoA + diphosphate. The protein operates within cofactor biosynthesis; coenzyme A biosynthesis; CoA from (R)-pantothenate: step 4/5. In terms of biological role, reversibly transfers an adenylyl group from ATP to 4'-phosphopantetheine, yielding dephospho-CoA (dPCoA) and pyrophosphate. The chain is Phosphopantetheine adenylyltransferase from Pseudomonas putida (strain ATCC 47054 / DSM 6125 / CFBP 8728 / NCIMB 11950 / KT2440).